A 502-amino-acid polypeptide reads, in one-letter code: Glycerol kinase (502 aa).

Thr-16 is an ADP binding site. ATP contacts are provided by Thr-16, Thr-17, and Ser-18. Thr-16 serves as a coordination point for sn-glycerol 3-phosphate. Arg-20 lines the ADP pocket. Sn-glycerol 3-phosphate-binding residues include Arg-86, Glu-87, Tyr-138, and Asp-247. 5 residues coordinate glycerol: Arg-86, Glu-87, Tyr-138, Asp-247, and Gln-248. ADP contacts are provided by Thr-269 and Gly-312. Residues Thr-269, Gly-312, Gln-316, and Gly-413 each contribute to the ATP site. 2 residues coordinate ADP: Gly-413 and Asn-417.

The protein belongs to the FGGY kinase family.

It carries out the reaction glycerol + ATP = sn-glycerol 3-phosphate + ADP + H(+). It participates in polyol metabolism; glycerol degradation via glycerol kinase pathway; sn-glycerol 3-phosphate from glycerol: step 1/1. With respect to regulation, inhibited by fructose 1,6-bisphosphate (FBP). In terms of biological role, key enzyme in the regulation of glycerol uptake and metabolism. Catalyzes the phosphorylation of glycerol to yield sn-glycerol 3-phosphate. This is Glycerol kinase from Dechloromonas aromatica (strain RCB).